A 416-amino-acid chain; its full sequence is MSTPLQGIKVLDFTGVQSGPSCTQMLAWFGADVIKIERPGVGDVTRHQLRDIPDIDALYFTMLNSNKRSIELNTKTAEGKEVMEKLIREADILVENFHPGAIDHMGFTWEHIQEINPRLIFGSIKGFDECSPYVNVKAYENVAQAAGGAASTTGFWDGPPLVSAAALGDSNTGMHLLIGLLAALLHREKTGRGQRVTMSMQDAVLNLCRVKLRDQQRLDKLGYLEEYPQYPNGTFGDAVPRGGNAGGGGQPGWILKCKGWETDPNAYIYFTIQEQNWENTCKAIGKPEWITDSAYSTAHARQPHIFDIFAEIEKYTVTIDKHEAVAYLTQFDIPCAPVLSMKEISLDPSLRQSGSVVEVEQPLRGKYLTVGCPMKFSAFTPDIKAAPLLGEHTAAVLQELGYSDDEIAAMKQNHAI.

CoA contacts are provided by residues 17–18 (QS), Arg38, 72–75 (LNTK), 96–98 (NFH), His104, and 137–140 (KAYE). Residue Asp169 is the Nucleophile of the active site. Substrate is bound at residue 248–250 (GGQ). Residue 273-275 (QEQ) participates in CoA binding.

Belongs to the CoA-transferase III family. Frc subfamily. Homodimer.

The enzyme catalyses formyl-CoA + oxalate = oxalyl-CoA + formate. Its pathway is metabolic intermediate degradation; oxalate degradation; CO(2) and formate from oxalate: step 1/2. Involved in the catabolism of oxalate and in the adapatation to low pH via the induction of the oxalate-dependent acid tolerance response (ATR). Catalyzes the transfer of the CoA moiety from formyl-CoA to oxalate. In Shigella sonnei (strain Ss046), this protein is Formyl-CoA:oxalate CoA-transferase.